We begin with the raw amino-acid sequence, 1913 residues long: Protein TIC 214 (1913 aa).

5 consecutive transmembrane segments (helical) span residues 18–38 (IINSVVVVGLYYGFLTTFSIG), 64–84 (FITGQLMMFISIYYAPLHLAL), 124–144 (LSIQCVFLTNLIFQLFNHLML), 172–192 (VGWLIGHILFMKWVGLVVSWI), and 214–234 (LKSAIAQILSIIFFIACVNYL). Disordered stretches follow at residues 245–330 (KLNE…ETEE), 707–734 (YTDKNQNRDQDPNPNTDNTTTENDNSDT), and 1605–1652 (EKED…RKKK). The segment covering 260–289 (KESQKSKESEEERDVEKETTSETKETKQEQ) has biased composition (basic and acidic residues). Acidic residues predominate over residues 303 to 314 (EKEDPDKIDETE). Over residues 315–330 (EIRVNGKEKKKDETEE) the composition is skewed to basic and acidic residues. Residues 718 to 729 (PNPNTDNTTTEN) show a composition bias toward low complexity.

Belongs to the TIC214 family. Part of the Tic complex.

The protein localises to the plastid. It is found in the chloroplast inner membrane. Its function is as follows. Involved in protein precursor import into chloroplasts. May be part of an intermediate translocation complex acting as a protein-conducting channel at the inner envelope. The protein is Protein TIC 214 of Acorus calamus var. americanus (American sweet flag).